The sequence spans 297 residues: Formylmethanofuran--tetrahydromethanopterin formyltransferase-like protein (297 aa).

It belongs to the FTR family.

The sequence is that of Formylmethanofuran--tetrahydromethanopterin formyltransferase-like protein (ehaS) from Methanothermobacter thermautotrophicus (strain ATCC 29096 / DSM 1053 / JCM 10044 / NBRC 100330 / Delta H) (Methanobacterium thermoautotrophicum).